The following is a 452-amino-acid chain: tRNA modification GTPase MnmE (452 aa).

Arg21, Glu78, and Lys118 together coordinate (6S)-5-formyl-5,6,7,8-tetrahydrofolate. The TrmE-type G domain occupies Gly214–Gly375. Asn224 provides a ligand contact to K(+). Residues Asn224–Ser229, Thr243–Thr249, and Asp268–Gly271 each bind GTP. Ser228 contributes to the Mg(2+) binding site. The K(+) site is built by Thr243, Ile245, and Thr248. Residue Thr249 coordinates Mg(2+). Position 452 (Lys452) interacts with (6S)-5-formyl-5,6,7,8-tetrahydrofolate.

It belongs to the TRAFAC class TrmE-Era-EngA-EngB-Septin-like GTPase superfamily. TrmE GTPase family. As to quaternary structure, homodimer. Heterotetramer of two MnmE and two MnmG subunits. K(+) serves as cofactor.

It localises to the cytoplasm. Functionally, exhibits a very high intrinsic GTPase hydrolysis rate. Involved in the addition of a carboxymethylaminomethyl (cmnm) group at the wobble position (U34) of certain tRNAs, forming tRNA-cmnm(5)s(2)U34. This chain is tRNA modification GTPase MnmE, found in Haemophilus influenzae (strain PittGG).